Here is a 1254-residue protein sequence, read N- to C-terminus: NPC intracellular cholesterol transporter 1 homolog 1b (1254 aa).

The signal sequence occupies residues 1 to 16 (MKVIFATIWLIAGAWS). Over 17-272 (QSAEQLGCIW…WKIAGLYGVT (256 aa)) the chain is Extracellular. 8 disulfide bridges follow: Cys-24/Cys-81, Cys-62/Cys-116, Cys-82/Cys-120, Cys-104/Cys-241, Cys-107/Cys-161, Cys-178/Cys-186, Cys-231/Cys-246, and Cys-243/Cys-250. N-linked (GlcNAc...) asparagine glycans are attached at residues Asn-123 and Asn-132. Residues 273 to 293 (FILALIIACALSFFIFWGAFG) form a helical membrane-spanning segment. At 294 to 325 (KTSAPSVCMPTLFGEFFYHGFRIWGTFCAKHP) the chain is on the cytoplasmic side. The helical transmembrane segment at 326–346 (VIVLALCSWAIAGLSFGIRYM) threads the bilayer. The Extracellular segment spans residues 347 to 593 (TITTDPVELW…AIVELSEGEV (247 aa)). A glycan (N-linked (GlcNAc...) asparagine) is linked at Asn-389. An intrachain disulfide couples Cys-438 to Cys-454. N-linked (GlcNAc...) asparagine glycosylation occurs at Asn-479. Cys-491 and Cys-500 are oxidised to a cystine. The region spanning 592–757 (EVSTVVISYV…ITAFVALMAI (166 aa)) is the SSD domain. The helical transmembrane segment at 594 to 614 (STVVISYVVMFVYVAIALGHI) threads the bilayer. Topologically, residues 615–625 (RSCRGFLRESR) are cytoplasmic. The helical transmembrane segment at 626–646 (IMLAIGGIVIVLASVVCSLGF) threads the bilayer. Over 647 to 657 (WGYLDVTTTML) the chain is Extracellular. Residues 658-678 (AIEVIPFLVLAVGVDNIFIMV) form a helical membrane-spanning segment. Residues 679–736 (HTYQRLDHSKFKTTHEAIGEAIGQVGPSILQTAGSEMACFAIGCISDMPAVKTFAMYA) lie on the Cytoplasmic side of the membrane. The helical transmembrane segment at 737 to 757 (AIAILLDFLLQITAFVALMAI) threads the bilayer. Topologically, residues 758 to 815 (DEKRYLDGRLDMLCCVKSGGKKINDEDGDGVDRPKEVGLLETLFKNFYSPFLLSKPVK) are extracellular. A helical membrane pass occupies residues 816 to 836 (VSVLLIFTVITCLSLMVTPSI). The Cytoplasmic segment spans residues 837 to 857 (EKGLDQEMSMPKNSHVVKYFR). A helical membrane pass occupies residues 858 to 878 (YMVDLLAMGAPVYWVLKPGLN). Topologically, residues 879-1079 (YSEPLQQNLI…EQYLTIWGDA (201 aa)) are extracellular. A disulfide bridge links Cys-889 with Cys-894. 2 N-linked (GlcNAc...) asparagine glycosylation sites follow: Asn-896 and Asn-939. 3 disulfides stabilise this stretch: Cys-935/Cys-990, Cys-936/Cys-958, and Cys-946/Cys-955. Residues 1080-1100 (MFSLGMSLVAIFLVTLLITGL) traverse the membrane as a helical segment. At 1101–1105 (DITST) the chain is on the cytoplasmic side. The chain crosses the membrane as a helical span at residues 1106-1126 (FIVLFMVICILINMLGMMWAW). Residues 1127–1132 (SINLNA) lie on the Extracellular side of the membrane. Residues 1133–1153 (ISLVNLVVCVGIGVEFVAHIV) traverse the membrane as a helical segment. Over 1154-1174 (RSFKRAEGTAQERARHSLNVT) the chain is Cytoplasmic. A helical membrane pass occupies residues 1175 to 1195 (GSSVLSGITLTKFAGIVVLGF). Residues 1196 to 1207 (SNSQIFQVFYFR) lie on the Extracellular side of the membrane. Residues 1208–1228 (MYLGIVLIGAAHGLILLPVLL) traverse the membrane as a helical segment. Residues 1229–1254 (SLLGPPQKLARSSGAEPTASITITTN) lie on the Cytoplasmic side of the membrane.

The protein belongs to the patched family. Expressed in the midgut.

The protein resides in the cell membrane. It catalyses the reaction cholesterol(in) = cholesterol(out). Its function is as follows. Important for cholesterol absorption at the midgut epithelium. Acts only in the early steps of sterol absorption, prior to Npc1a-dependent intracellular sterol trafficking. The polypeptide is NPC intracellular cholesterol transporter 1 homolog 1b (Drosophila melanogaster (Fruit fly)).